An 86-amino-acid chain; its full sequence is Cytochrome c oxidase subunit 6B1 (86 aa).

Alanine 2 is subject to N-acetylalanine. In terms of domain architecture, CHCH spans 27–73 (TRNCWQNYLDFHRCEKAMTAKGGDVSVCEWYRRVYKSLCPISWVSTW). The short motif at 30–40 (CWQNYLDFHRC) is the Cx9C motif element. 2 cysteine pairs are disulfide-bonded: cysteine 30–cysteine 65 and cysteine 40–cysteine 54. The Cx10C motif motif lies at 54 to 65 (CEWYRRVYKSLC). Residue lysine 62 is modified to N6-acetyllysine.

Belongs to the cytochrome c oxidase subunit 6B family. As to quaternary structure, component of the cytochrome c oxidase (complex IV, CIV), a multisubunit enzyme composed of 14 subunits. The complex is composed of a catalytic core of 3 subunits MT-CO1, MT-CO2 and MT-CO3, encoded in the mitochondrial DNA, and 11 supernumerary subunits COX4I1 (or COX4I2), COX5A, COX5B, COX6A2 (or COX6A1), COX6B1 (or COX6B2), COX6C, COX7A1 (or COX7A2), COX7B, COX7C, COX8B and NDUFA4, which are encoded in the nuclear genome. The complex exists as a monomer or a dimer and forms supercomplexes (SCs) in the inner mitochondrial membrane with NADH-ubiquinone oxidoreductase (complex I, CI) and ubiquinol-cytochrome c oxidoreductase (cytochrome b-c1 complex, complex III, CIII), resulting in different assemblies (supercomplex SCI(1)III(2)IV(1) and megacomplex MCI(2)III(2)IV(2)).

It is found in the mitochondrion inner membrane. The protein operates within energy metabolism; oxidative phosphorylation. In terms of biological role, component of the cytochrome c oxidase, the last enzyme in the mitochondrial electron transport chain which drives oxidative phosphorylation. The respiratory chain contains 3 multisubunit complexes succinate dehydrogenase (complex II, CII), ubiquinol-cytochrome c oxidoreductase (cytochrome b-c1 complex, complex III, CIII) and cytochrome c oxidase (complex IV, CIV), that cooperate to transfer electrons derived from NADH and succinate to molecular oxygen, creating an electrochemical gradient over the inner membrane that drives transmembrane transport and the ATP synthase. Cytochrome c oxidase is the component of the respiratory chain that catalyzes the reduction of oxygen to water. Electrons originating from reduced cytochrome c in the intermembrane space (IMS) are transferred via the dinuclear copper A center (CU(A)) of subunit 2 and heme A of subunit 1 to the active site in subunit 1, a binuclear center (BNC) formed by heme A3 and copper B (CU(B)). The BNC reduces molecular oxygen to 2 water molecules using 4 electrons from cytochrome c in the IMS and 4 protons from the mitochondrial matrix. In Bos taurus (Bovine), this protein is Cytochrome c oxidase subunit 6B1 (COX6B1).